The primary structure comprises 448 residues: Tubulin beta-2 chain (448 aa).

The GTP site is built by glutamine 11, glutamate 69, serine 138, glycine 142, threonine 143, glycine 144, asparagine 204, and asparagine 226. Mg(2+) is bound at residue glutamate 69. A disordered region spans residues threonine 429–alanine 448.

It belongs to the tubulin family. Dimer of alpha and beta chains. A typical microtubule is a hollow water-filled tube with an outer diameter of 25 nm and an inner diameter of 15 nM. Alpha-beta heterodimers associate head-to-tail to form protofilaments running lengthwise along the microtubule wall with the beta-tubulin subunit facing the microtubule plus end conferring a structural polarity. Microtubules usually have 13 protofilaments but different protofilament numbers can be found in some organisms and specialized cells. Mg(2+) is required as a cofactor.

It localises to the cytoplasm. The protein localises to the cytoskeleton. In terms of biological role, tubulin is the major constituent of microtubules, a cylinder consisting of laterally associated linear protofilaments composed of alpha- and beta-tubulin heterodimers. Microtubules grow by the addition of GTP-tubulin dimers to the microtubule end, where a stabilizing cap forms. Below the cap, tubulin dimers are in GDP-bound state, owing to GTPase activity of alpha-tubulin. In Lupinus albus (White lupine), this protein is Tubulin beta-2 chain (TUBB2).